Reading from the N-terminus, the 267-residue chain is 4-hydroxy-tetrahydrodipicolinate reductase (267 aa).

NAD(+)-binding positions include 12-17 (GPRGRM), 100-102 (GTT), and 126-129 (APNF). The Proton donor/acceptor role is filled by His-156. His-157 lines the (S)-2,3,4,5-tetrahydrodipicolinate pocket. Lys-160 functions as the Proton donor in the catalytic mechanism. Residue 166–167 (GT) participates in (S)-2,3,4,5-tetrahydrodipicolinate binding.

The protein belongs to the DapB family.

The protein localises to the cytoplasm. It catalyses the reaction (S)-2,3,4,5-tetrahydrodipicolinate + NAD(+) + H2O = (2S,4S)-4-hydroxy-2,3,4,5-tetrahydrodipicolinate + NADH + H(+). The enzyme catalyses (S)-2,3,4,5-tetrahydrodipicolinate + NADP(+) + H2O = (2S,4S)-4-hydroxy-2,3,4,5-tetrahydrodipicolinate + NADPH + H(+). The protein operates within amino-acid biosynthesis; L-lysine biosynthesis via DAP pathway; (S)-tetrahydrodipicolinate from L-aspartate: step 4/4. Its function is as follows. Catalyzes the conversion of 4-hydroxy-tetrahydrodipicolinate (HTPA) to tetrahydrodipicolinate. The sequence is that of 4-hydroxy-tetrahydrodipicolinate reductase from Bacillus licheniformis (strain ATCC 14580 / DSM 13 / JCM 2505 / CCUG 7422 / NBRC 12200 / NCIMB 9375 / NCTC 10341 / NRRL NRS-1264 / Gibson 46).